The sequence spans 227 residues: Large ribosomal subunit protein uL3 (227 aa).

Q158 bears the N5-methylglutamine mark.

The protein belongs to the universal ribosomal protein uL3 family. In terms of assembly, part of the 50S ribosomal subunit. Forms a cluster with proteins L14 and L19. Methylated by PrmB.

In terms of biological role, one of the primary rRNA binding proteins, it binds directly near the 3'-end of the 23S rRNA, where it nucleates assembly of the 50S subunit. This Polaromonas sp. (strain JS666 / ATCC BAA-500) protein is Large ribosomal subunit protein uL3.